Consider the following 78-residue polypeptide: Acyl carrier protein (78 aa).

A Carrier domain is found at Q2–V77. S37 is modified (O-(pantetheine 4'-phosphoryl)serine).

This sequence belongs to the acyl carrier protein (ACP) family. 4'-phosphopantetheine is transferred from CoA to a specific serine of apo-ACP by AcpS. This modification is essential for activity because fatty acids are bound in thioester linkage to the sulfhydryl of the prosthetic group.

Its subcellular location is the cytoplasm. It functions in the pathway lipid metabolism; fatty acid biosynthesis. Carrier of the growing fatty acid chain in fatty acid biosynthesis. This chain is Acyl carrier protein, found in Buchnera aphidicola subsp. Baizongia pistaciae (strain Bp).